The sequence spans 175 residues: Large ribosomal subunit protein uL16 (175 aa).

The protein belongs to the universal ribosomal protein uL16 family.

The polypeptide is Large ribosomal subunit protein uL16 (Caldivirga maquilingensis (strain ATCC 700844 / DSM 13496 / JCM 10307 / IC-167)).